We begin with the raw amino-acid sequence, 213 residues long: Putative 3-methyladenine DNA glycosylase (213 aa).

It belongs to the DNA glycosylase MPG family.

This is Putative 3-methyladenine DNA glycosylase from Corynebacterium jeikeium (strain K411).